The following is a 270-amino-acid chain: Pre-mRNA-splicing factor CWC23 (270 aa).

Residues 12 to 84 (DLYRILHIHV…EHKKEYDIWY (73 aa)) enclose the J domain.

This sequence belongs to the DnaJ family. In terms of assembly, associated with the spliceosome.

It is found in the cytoplasm. Its subcellular location is the nucleus. In terms of biological role, involved in pre-mRNA splicing. May be involved in endoplasmic reticulum-associated protein degradation (ERAD) and required for growth at low and high temperatures. The protein is Pre-mRNA-splicing factor CWC23 (CWC23) of Kluyveromyces lactis (strain ATCC 8585 / CBS 2359 / DSM 70799 / NBRC 1267 / NRRL Y-1140 / WM37) (Yeast).